The following is a 300-amino-acid chain: Exonuclease (300 aa).

It catalyses the reaction Exonucleolytic cleavage in the 5'- to 3'-direction to yield nucleoside 5'-phosphates.. Plays an essential role in phage DNA replication by participating in the removal of DNA-linked RNA primers. Participates also in T7 DNA packaging, host DNA degradation and phage genetic recombination. This Escherichia phage T7 (Bacteriophage T7) protein is Exonuclease.